Consider the following 197-residue polypeptide: Adenylate kinase (197 aa).

12 to 17 (GSGKTT) serves as a coordination point for ATP. Positions 34–63 (STGDMLREEVASGSELGKTIESYIAKGALV) are NMP. Residues threonine 35, arginine 40, 61–63 (ALV), 88–91 (GYPR), and glutamine 95 each bind AMP. The segment at 130–144 (GRRAEAAPGEERSDD) is LID. An ATP-binding site is contributed by arginine 131. 2 residues coordinate AMP: arginine 141 and arginine 152. ATP is bound at residue arginine 180.

It belongs to the adenylate kinase family. Monomer.

Its subcellular location is the cytoplasm. The enzyme catalyses AMP + ATP = 2 ADP. It functions in the pathway purine metabolism; AMP biosynthesis via salvage pathway; AMP from ADP: step 1/1. Its function is as follows. Catalyzes the reversible transfer of the terminal phosphate group between ATP and AMP. Plays an important role in cellular energy homeostasis and in adenine nucleotide metabolism. The chain is Adenylate kinase from Sulfurovum sp. (strain NBC37-1).